The primary structure comprises 59 residues: Single-pass membrane and coiled-coil domain-containing protein 4 homolog (59 aa).

Over residues 1-11 (MAGRNKAKPRL) the composition is skewed to basic residues. A disordered region spans residues 1–20 (MAGRNKAKPRLSKKEKEERR). Residues 10–30 (RLSKKEKEERRKDMAEVQEKV) are a coiled coil. The helical transmembrane segment at 30 to 50 (VFSVVVPVVVAFTVVIMLIVY) threads the bilayer.

This sequence belongs to the SMCO4 family.

It localises to the membrane. This is Single-pass membrane and coiled-coil domain-containing protein 4 homolog from Argas monolakensis (Mono lake bird tick).